The following is a 504-amino-acid chain: Transcription factor NDT80 (504 aa).

Disordered regions lie at residues 64 to 172 (MHFN…QHHM), 283 to 310 (NGFP…NQHA), and 477 to 504 (RGRS…TPPQ). Low complexity-rich tracts occupy residues 73–87 (QQQQ…QQQQ), 103–145 (QGPT…ARQP), 153–172 (QQAQ…QHHM), and 292–301 (HPQNQPQNHP). The NDT80 DNA-binding region spans 160–488 (QADAQSQAQQ…RSPSSYHKDR (329 aa)).

Its subcellular location is the nucleus. Functionally, meiosis-specific transcription factor that binds to the middle sporulation element (MSE) of targeted genes corresponding to the consensus sequence 5'-ACACAAA-3'. Acts as an activator of CDR1 induction by antifungal drugs. Modulates azole sensitivity by controlling the expression of ergosterol biosynthesis genes. Required for hyphal growth in response to different filament-inducing cues and for the proper expression of genes characterizing the filamentous transcriptional program including noteworthy genes encoding cell wall components, such as HWP1, ECE1, RBT4, and ALS3. Is essential for the completion of cell separation through the direct transcriptional regulation of genes encoding the chitinase CHT3 and the cell wall glucosidase SUN41. Required for biofilm formation and plays a key role in microcolony formation under both flow and static conditions and to epithelial surfaces. Essential for virulence. This is Transcription factor NDT80 from Candida albicans (strain SC5314 / ATCC MYA-2876) (Yeast).